The sequence spans 283 residues: MALDLTAYFDRINYRGATDPTLDVLQDLVTVHSRTIPFENLDPLLGVPVDDLSPQALADKLVLRRRGGYCFEHNGLMGYVLAELGYRVRRFAARVVWKLAPDAPLPPQTHTLLGVTFPGSGGCYLVDVGFGGQTPTSPLRLETGAVQPTTHEPYRLEDRVDGFVLQAMVRDTWQTLYEFTTQTRPQIDLKVASWYASTHPASKFVTGLTAAVITDDARWNLSGRDLAVHRAGGTEKIRLADAAAVVDTLSERFGINVADIGERGALETRIDELLARQPGADAP.

Cysteine 70 acts as the Acyl-thioester intermediate in catalysis. Residues histidine 110 and aspartate 127 contribute to the active site.

It belongs to the arylamine N-acetyltransferase family. Homodimer and homotetramer.

It catalyses the reaction an arylamine + acetyl-CoA = an N-acetylarylamine + CoA. In terms of biological role, catalyzes the transfer of the acetyl group from acetyl coenzyme A to the free amino group of arylamines and hydrazines. Is able to utilize not only acetyl-CoA, but also n-propionyl-CoA and acetoacetyl-CoA as acyl donors, although at a lower rate. As acetyl-CoA and propionyl-CoA are products of cholesterol catabolism and the nat gene is likely present in the same operon than genes involved in cholesterol degradation, this enzyme could have a role in the utilization and regulation of these CoA species. This is Arylamine N-acetyltransferase (nat) from Mycobacterium bovis (strain ATCC BAA-935 / AF2122/97).